Reading from the N-terminus, the 331-residue chain is Glyceraldehyde-3-phosphate dehydrogenase 2 (331 aa).

Residues 11–12 (RI), Asp-33, and Arg-78 each bind NAD(+). Residues 148–150 (SCT), Thr-179, 208–209 (TG), and Arg-231 contribute to the D-glyceraldehyde 3-phosphate site. Cys-149 functions as the Nucleophile in the catalytic mechanism. Asn-313 provides a ligand contact to NAD(+).

The protein belongs to the glyceraldehyde-3-phosphate dehydrogenase family. Homotetramer.

It localises to the cytoplasm. It catalyses the reaction D-glyceraldehyde 3-phosphate + phosphate + NAD(+) = (2R)-3-phospho-glyceroyl phosphate + NADH + H(+). It participates in carbohydrate degradation; glycolysis; pyruvate from D-glyceraldehyde 3-phosphate: step 1/5. In Kluyveromyces marxianus (Yeast), this protein is Glyceraldehyde-3-phosphate dehydrogenase 2 (GAP2).